A 223-amino-acid polypeptide reads, in one-letter code: Putative germin-like protein 2-2 (223 aa).

Residues methionine 1–alanine 28 form the signal peptide. The cysteines at positions 38 and 53 are disulfide-linked. The 151-residue stretch at serine 67 to aspartate 217 folds into the Cupin type-1 domain. N-linked (GlcNAc...) asparagine glycans are attached at residues asparagine 74 and asparagine 82. The Mn(2+) site is built by histidine 115, histidine 117, glutamate 122, and histidine 163. Asparagine 168 carries N-linked (GlcNAc...) asparagine glycosylation.

Belongs to the germin family. As to quaternary structure, oligomer (believed to be a pentamer but probably hexamer).

It is found in the secreted. Its subcellular location is the extracellular space. The protein resides in the apoplast. Its function is as follows. May play a role in plant defense. Probably has no oxalate oxidase activity even if the active site is conserved. The sequence is that of Putative germin-like protein 2-2 from Oryza sativa subsp. japonica (Rice).